The chain runs to 169 residues: Peptide deformylase (169 aa).

Fe cation-binding residues include Cys91 and His133. Residue Glu134 is part of the active site. Position 137 (His137) interacts with Fe cation.

Belongs to the polypeptide deformylase family. Requires Fe(2+) as cofactor.

It carries out the reaction N-terminal N-formyl-L-methionyl-[peptide] + H2O = N-terminal L-methionyl-[peptide] + formate. Removes the formyl group from the N-terminal Met of newly synthesized proteins. Requires at least a dipeptide for an efficient rate of reaction. N-terminal L-methionine is a prerequisite for activity but the enzyme has broad specificity at other positions. This chain is Peptide deformylase, found in Serratia proteamaculans (strain 568).